Here is a 446-residue protein sequence, read N- to C-terminus: Glutamyl-tRNA reductase (446 aa).

Substrate-binding positions include 49 to 52, serine 109, 114 to 116, and glutamine 120; these read TCNR and ETQ. Residue cysteine 50 is the Nucleophile of the active site. 189 to 194 is a binding site for NADP(+); it reads GAGEMA.

Belongs to the glutamyl-tRNA reductase family. As to quaternary structure, homodimer.

The catalysed reaction is (S)-4-amino-5-oxopentanoate + tRNA(Glu) + NADP(+) = L-glutamyl-tRNA(Glu) + NADPH + H(+). Its pathway is porphyrin-containing compound metabolism; protoporphyrin-IX biosynthesis; 5-aminolevulinate from L-glutamyl-tRNA(Glu): step 1/2. In terms of biological role, catalyzes the NADPH-dependent reduction of glutamyl-tRNA(Glu) to glutamate 1-semialdehyde (GSA). The sequence is that of Glutamyl-tRNA reductase from Macrococcus caseolyticus (strain JCSC5402) (Macrococcoides caseolyticum).